The sequence spans 32 residues: MSDIN-like toxin proprotein 11 (32 aa).

A propeptide spanning residues 1–10 (MSDINATRLP) is cleaved from the precursor. Residues 1–32 (MSDINATRLPGMEPPSPMPCVGDADNFTLTRG) form a disordered region. Positions 11–19 (GMEPPSPMP) form a cross-link, cyclopeptide (Gly-Pro). Residues 20–32 (CVGDADNFTLTRG) constitute a propeptide that is removed on maturation.

It belongs to the MSDIN fungal toxin family. In terms of processing, processed by the macrocyclase-peptidase enzyme POPB to yield a toxic cyclic nonapeptide. POPB first removes 10 residues from the N-terminus. Conformational trapping of the remaining peptide forces the enzyme to release this intermediate rather than proceed to macrocyclization. The enzyme rebinds the remaining peptide in a different conformation and catalyzes macrocyclization of the N-terminal 9 residues.

Functionally, probable toxin that belongs to the MSDIN-like toxin family responsible for a large number of food poisoning cases and deaths. This chain is MSDIN-like toxin proprotein 11, found in Amanita bisporigera (Destroying angel).